We begin with the raw amino-acid sequence, 630 residues long: Putative polypeptide N-acetylgalactosaminyltransferase 10 (630 aa).

Topologically, residues 1-6 (MNVDLR) are cytoplasmic. A helical; Signal-anchor for type II membrane protein membrane pass occupies residues 7–26 (LIVRLLLAILLTSLVTTILM). The Lumenal segment spans residues 27–630 (GKQIHRRLVK…APYDPQREPH (604 aa)). N72, N84, N146, and N168 each carry an N-linked (GlcNAc...) asparagine glycan. Cystine bridges form between C157/C386, C377/C456, and C496/C513. The catalytic subdomain A stretch occupies residues 166 to 277 (LPNVTVIIAF…TNWLPPLLEP (112 aa)). Substrate is bound by residues D207 and R238. D261 lines the Mn(2+) pocket. S262 serves as a coordination point for substrate. Mn(2+) is bound at residue H263. Residues 333-394 (PYRTPVLSGA…PCARVGHIGK (62 aa)) form a catalytic subdomain B region. Residue W363 participates in substrate binding. H391 is a Mn(2+) binding site. Residues 483-618 (FSGVIESVAF…NQLEQQWKVG (136 aa)) enclose the Ricin B-type lectin domain. N525 is a glycosylation site (N-linked (GlcNAc...) asparagine). 2 cysteine pairs are disulfide-bonded: C543–C559 and C586–C606.

It belongs to the glycosyltransferase 2 family. GalNAc-T subfamily. It depends on Mn(2+) as a cofactor. In terms of tissue distribution, during embryonic stages 9-11, weakly expressed in the mesoderm. During embryonic stages 12-13, very weak expression is observed in the somatic mesoderm region. No expression detected from stage 14-15. During embryonic stages 16-17, expressed in the epidermis and the antennomaxillary complex. In third instar larvae, expressed ubiquitously in wing, eye-antennal, leg and haltere imaginal disks.

The protein resides in the golgi apparatus membrane. The catalysed reaction is L-seryl-[protein] + UDP-N-acetyl-alpha-D-galactosamine = a 3-O-[N-acetyl-alpha-D-galactosaminyl]-L-seryl-[protein] + UDP + H(+). It carries out the reaction L-threonyl-[protein] + UDP-N-acetyl-alpha-D-galactosamine = a 3-O-[N-acetyl-alpha-D-galactosaminyl]-L-threonyl-[protein] + UDP + H(+). It participates in protein modification; protein glycosylation. Its function is as follows. May catalyze the initial reaction in O-linked oligosaccharide biosynthesis, the transfer of an N-acetyl-D-galactosamine residue to a serine or threonine residue on the protein receptor. The sequence is that of Putative polypeptide N-acetylgalactosaminyltransferase 10 (pgant10) from Drosophila melanogaster (Fruit fly).